A 188-amino-acid chain; its full sequence is FUN14 domain-containing protein 1B (188 aa).

A helical transmembrane segment spans residues 21–41 (VVNIDGNIFSIYVCFFVCFFF). The YXXL signature appears at 52 to 55 (YEVL). The next 3 helical transmembrane spans lie at 82–102 (YSVA…GFLF), 109–129 (AATA…GGYI), and 167–187 (FFKK…IGLA).

This sequence belongs to the FUN14 family.

The protein localises to the mitochondrion outer membrane. Functionally, acts as an activator of hypoxia-induced mitophagy, an important mechanism for mitochondrial quality control. In Xenopus laevis (African clawed frog), this protein is FUN14 domain-containing protein 1B (fundc1-b).